A 112-amino-acid chain; its full sequence is 2Fe-2S ferredoxin (112 aa).

A 2Fe-2S ferredoxin-type domain is found at 5–107; sequence IKVTFIINDE…GIKVRLPSAT (103 aa). Residues cysteine 42, cysteine 48, cysteine 51, and cysteine 88 each coordinate [2Fe-2S] cluster.

Belongs to the adrenodoxin/putidaredoxin family. [2Fe-2S] cluster is required as a cofactor.

Its function is as follows. Ferredoxin are iron-sulfur proteins that transfer electrons in a wide variety of metabolic reactions. The chain is 2Fe-2S ferredoxin (fdxB) from Rickettsia prowazekii (strain Madrid E).